We begin with the raw amino-acid sequence, 224 residues long: MTTVLEILDVSKCYGRRNRVCVLSNINLKIQRGEFAALIGSSGSGKSTLLHIASLLEVPTSGTVVLNGTVCAPASDKTRTMMRRKHMGFVYQFHHLLQEFSVLENVMLPQRILGHGASTAESVAAAILEEMGLQDKAECRISELSGGERQRVAVARGIVNSPTIILADEPTGSLDPQMSKAVFSVLHKHVKAKNLAGLVATHDRTLAKQTDRVLSLSGGMLTEL.

The 220-residue stretch at 5-224 (LEILDVSKCY…SLSGGMLTEL (220 aa)) folds into the ABC transporter domain. 40-47 (GSSGSGKS) provides a ligand contact to ATP.

This sequence belongs to the ABC transporter superfamily. Lipoprotein translocase (TC 3.A.1.125) family. The complex is composed of two ATP-binding proteins (LolD) and two transmembrane proteins (LolC and LolE).

Its subcellular location is the cell inner membrane. Part of the ABC transporter complex LolCDE involved in the translocation of mature outer membrane-directed lipoproteins, from the inner membrane to the periplasmic chaperone, LolA. Responsible for the formation of the LolA-lipoprotein complex in an ATP-dependent manner. The protein is Lipoprotein-releasing system ATP-binding protein LolD of Anaplasma marginale (strain St. Maries).